The following is a 632-amino-acid chain: MAU2 chromatid cohesion factor homolog (632 aa).

TPR repeat units lie at residues 453-486 (GGFYYVQGLHAFHKNSFHEAKRFLRETLKMANAE) and 493-526 (SCSLVLLSHVFLSIGNSKESMNMVTPAMQLASKI).

This sequence belongs to the SCC4/mau-2 family. In terms of assembly, interacts with Nipped-B to form the cohesin loading complex.

The protein localises to the nucleus. It localises to the nucleoplasm. Functionally, required for association of the cohesin complex with chromatin during interphase. Plays a role in sister chromatid cohesion and normal progression through prometaphase. This Drosophila erecta (Fruit fly) protein is MAU2 chromatid cohesion factor homolog.